We begin with the raw amino-acid sequence, 78 residues long: D-alanyl carrier protein (78 aa).

The region spanning 1–78 (MEFRDQVLDL…KIVAVLEELR (78 aa)) is the Carrier domain. Serine 36 bears the O-(pantetheine 4'-phosphoryl)serine mark.

The protein belongs to the DltC family. In terms of processing, 4'-phosphopantetheine is transferred from CoA to a specific serine of apo-DCP.

Its subcellular location is the cytoplasm. It functions in the pathway cell wall biogenesis; lipoteichoic acid biosynthesis. Functionally, carrier protein involved in the D-alanylation of lipoteichoic acid (LTA). The loading of thioester-linked D-alanine onto DltC is catalyzed by D-alanine--D-alanyl carrier protein ligase DltA. The DltC-carried D-alanyl group is further transferred to cell membrane phosphatidylglycerol (PG) by forming an ester bond, probably catalyzed by DltD. D-alanylation of LTA plays an important role in modulating the properties of the cell wall in Gram-positive bacteria, influencing the net charge of the cell wall. In Staphylococcus saprophyticus subsp. saprophyticus (strain ATCC 15305 / DSM 20229 / NCIMB 8711 / NCTC 7292 / S-41), this protein is D-alanyl carrier protein.